The primary structure comprises 193 residues: Putative kinase protein 029R (193 aa).

9-17 (GIIGSGKSS) is an ATP binding site. Positions 31, 43, and 54 each coordinate substrate. Glutamate 78 acts as the Proton acceptor in catalysis. Residues arginine 79 and glutamate 142 each coordinate substrate.

Belongs to the DCK/DGK family.

This is Putative kinase protein 029R from Aedes vexans (Inland floodwater mosquito).